A 152-amino-acid polypeptide reads, in one-letter code: Sec-independent protein translocase protein TatB (152 aa).

A helical membrane pass occupies residues 1-21 (MFDVAPSELLLVAVVALVVIG). The span at 60–71 (EDMEKRWAEENA) shows a compositional bias: basic and acidic residues. Residues 60 to 152 (EDMEKRWAEE…KEADQQEKQS (93 aa)) form a disordered region. Composition is skewed to low complexity over residues 84 to 98 (TAST…PVSD) and 124 to 140 (AANH…STPA). The span at 141 to 152 (KPKEADQQEKQS) shows a compositional bias: basic and acidic residues.

This sequence belongs to the TatB family. As to quaternary structure, the Tat system comprises two distinct complexes: a TatABC complex, containing multiple copies of TatA, TatB and TatC subunits, and a separate TatA complex, containing only TatA subunits. Substrates initially bind to the TatABC complex, which probably triggers association of the separate TatA complex to form the active translocon.

The protein resides in the cell inner membrane. Functionally, part of the twin-arginine translocation (Tat) system that transports large folded proteins containing a characteristic twin-arginine motif in their signal peptide across membranes. Together with TatC, TatB is part of a receptor directly interacting with Tat signal peptides. TatB may form an oligomeric binding site that transiently accommodates folded Tat precursor proteins before their translocation. The chain is Sec-independent protein translocase protein TatB from Zymomonas mobilis subsp. mobilis (strain ATCC 31821 / ZM4 / CP4).